A 365-amino-acid chain; its full sequence is Nicotinate N-methyltransferase 1 (365 aa).

Asp-232 contributes to the S-adenosyl-L-methionine binding site.

Belongs to the class I-like SAM-binding methyltransferase superfamily. Cation-independent O-methyltransferase family.

It catalyses the reaction nicotinate + S-adenosyl-L-methionine = N-methylnicotinate + S-adenosyl-L-homocysteine. Functionally, involved in nicotinate detoxification in planta. Catalyzes the conversion of nicotinate to N-methylnicotinate, which is a detoxified form of endogenous nicotinate in planta. The chain is Nicotinate N-methyltransferase 1 from Oryza sativa subsp. japonica (Rice).